The following is a 182-amino-acid chain: Isopentenyl-diphosphate Delta-isomerase (182 aa).

Positions 25 and 32 each coordinate Mn(2+). The Nudix hydrolase domain maps to 30 to 164 (LLHLAFSSWL…PWAFSPWMVM (135 aa)). Residue C67 is part of the active site. H69 is a Mn(2+) binding site. Residue E87 coordinates Mg(2+). 2 residues coordinate Mn(2+): E114 and E116. The active site involves E116.

It belongs to the IPP isomerase type 1 family. As to quaternary structure, homodimer. Mg(2+) is required as a cofactor. Mn(2+) serves as cofactor.

It is found in the cytoplasm. The enzyme catalyses isopentenyl diphosphate = dimethylallyl diphosphate. The protein operates within isoprenoid biosynthesis; dimethylallyl diphosphate biosynthesis; dimethylallyl diphosphate from isopentenyl diphosphate: step 1/1. Its function is as follows. Catalyzes the 1,3-allylic rearrangement of the homoallylic substrate isopentenyl (IPP) to its highly electrophilic allylic isomer, dimethylallyl diphosphate (DMAPP). This is Isopentenyl-diphosphate Delta-isomerase from Escherichia coli O17:K52:H18 (strain UMN026 / ExPEC).